The primary structure comprises 89 residues: Small ribosomal subunit protein uS15 (89 aa).

This sequence belongs to the universal ribosomal protein uS15 family. Part of the 30S ribosomal subunit. Forms a bridge to the 50S subunit in the 70S ribosome, contacting the 23S rRNA.

One of the primary rRNA binding proteins, it binds directly to 16S rRNA where it helps nucleate assembly of the platform of the 30S subunit by binding and bridging several RNA helices of the 16S rRNA. Functionally, forms an intersubunit bridge (bridge B4) with the 23S rRNA of the 50S subunit in the ribosome. The protein is Small ribosomal subunit protein uS15 of Corynebacterium urealyticum (strain ATCC 43042 / DSM 7109).